We begin with the raw amino-acid sequence, 105 residues long: PTS system lactose-specific EIIA component (105 aa).

One can recognise a PTS EIIA type-3 domain in the interval 4–102 (EEMTLLGFEI…IHHLIELYKR (99 aa)). His-78 functions as the Tele-phosphohistidine intermediate in the catalytic mechanism. At His-78 the chain carries Phosphohistidine; by HPr. Asp-81 serves as a coordination point for Mg(2+).

As to quaternary structure, homotrimer. Mg(2+) is required as a cofactor.

It localises to the cytoplasm. The phosphoenolpyruvate-dependent sugar phosphotransferase system (sugar PTS), a major carbohydrate active transport system, catalyzes the phosphorylation of incoming sugar substrates concomitantly with their translocation across the cell membrane. The enzyme II LacEF PTS system is involved in lactose transport. This chain is PTS system lactose-specific EIIA component, found in Lactococcus lactis subsp. lactis (Streptococcus lactis).